Reading from the N-terminus, the 485-residue chain is Taxane 13-alpha-hydroxylase (485 aa).

Cysteine 431 lines the heme pocket.

The protein belongs to the cytochrome P450 family. Heme is required as a cofactor.

The enzyme catalyses taxa-4(20),11-dien-5alpha-ol + reduced [NADPH--hemoprotein reductase] + O2 = taxa-4(20),11-dien-5alpha,13alpha-diol + oxidized [NADPH--hemoprotein reductase] + H2O + H(+). It functions in the pathway alkaloid biosynthesis; taxol biosynthesis. Involved in the transformation of a taxadienyl acetate by hydroxylation at C13 to yield taxadien-5-alpha-acetoxy-13-alpha-ol. This chain is Taxane 13-alpha-hydroxylase (CYP725A2), found in Taxus cuspidata (Japanese yew).